We begin with the raw amino-acid sequence, 231 residues long: uncharacterized protein (231 aa).

The helical transmembrane segment at 10–30 threads the bilayer; it reads SQNIFFIAIVIFILSSVILYH.

It is found in the membrane. This is an uncharacterized protein from Rickettsia prowazekii (strain Madrid E).